Here is a 125-residue protein sequence, read N- to C-terminus: Prefoldin subunit beta (125 aa).

The protein belongs to the prefoldin subunit beta family. Heterohexamer of two alpha and four beta subunits.

It localises to the cytoplasm. Molecular chaperone capable of stabilizing a range of proteins. Seems to fulfill an ATP-independent, HSP70-like function in archaeal de novo protein folding. The chain is Prefoldin subunit beta from Halobacterium salinarum (strain ATCC 29341 / DSM 671 / R1).